Consider the following 870-residue polypeptide: Radial spoke head 10 homolog B (870 aa).

Positions 1-16 are enriched in basic and acidic residues; sequence MVKEKKKADKKGEKSA. The disordered stretch occupies residues 1–43; the sequence is MVKEKKKADKKGEKSARSPSSLSDNLDFSKQDGNTTRQEMSPA. Residues 17-39 are compositionally biased toward polar residues; the sequence is RSPSSLSDNLDFSKQDGNTTRQE. 10 MORN repeats span residues 86–108, 109–131, 132–154, 155–177, 179–201, 204–226, 227–249, 251–273, 284–306, and 307–329; these read YEGE…GGCT, YRGM…DGLK, YEGD…DGSM, YEGE…TQPV, YIGH…QEGT, YEGD…SGNI, YEGQ…TTNE, YTGR…LKRI, YIGE…SGAM, and YDGE…NGRV. A disordered region spans residues 674–704; it reads NKSPSAVMSHESDAAHSDSARSSSSKLELSP. Residues 683-692 show a composition bias toward basic and acidic residues; it reads HESDAAHSDS. Residues 693 to 703 are compositionally biased toward low complexity; that stretch reads ARSSSSKLELS. The stretch at 784–811 forms a coiled coil; it reads KEKIRADRLRSTAQAQQRKMEDDELEAR. The disordered stretch occupies residues 840–870; the sequence is VSSSHLILDPPKEDVTVSPSSKTITSKKKKK.

In terms of assembly, interacts with RSPH6A. Does not appear to be part of the axonemal radial spoke complexes 1 or 2.

It localises to the cytoplasm. The protein localises to the cytoskeleton. It is found in the cilium axoneme. The protein resides in the cell projection. Its subcellular location is the cilium. It localises to the flagellum. Its function is as follows. May function as part of the axonemal radial spoke complex 3 (RS3). Radial spoke complexes are important for ciliary motility. This chain is Radial spoke head 10 homolog B (RSPH10B), found in Homo sapiens (Human).